The sequence spans 331 residues: Major outer membrane protein P.IB (331 aa).

An N-terminal signal peptide occupies residues 1-19 (MKKSLIALTLAALPVAAMA).

It belongs to the Gram-negative porin family. Homotrimer.

It is found in the cell outer membrane. Functionally, serves as a slightly cation selective porin. This chain is Major outer membrane protein P.IB (porB), found in Neisseria meningitidis serogroup B (strain ATCC BAA-335 / MC58).